The chain runs to 437 residues: Protein farnesyltransferase subunit beta (437 aa).

PFTB repeat units follow at residues 123–164 (ATDV…CIIG), 174–215 (REKL…SLTN), 222–263 (FEGT…VILK), 270–312 (LKSL…PLLH), and 332–374 (QQAL…SIAQ). (2E,6E)-farnesyl diphosphate-binding positions include 248 to 251 (HGGY) and 291 to 294 (RCNK). Residues D297 and C299 each contribute to the Zn(2+) site. 300 to 303 (YSFW) serves as a coordination point for (2E,6E)-farnesyl diphosphate. H362 provides a ligand contact to Zn(2+). S432 carries the post-translational modification Phosphoserine. T436 is subject to Phosphothreonine.

The protein belongs to the protein prenyltransferase subunit beta family. In terms of assembly, heterodimer of FNTA and FNTB. Zn(2+) is required as a cofactor.

The catalysed reaction is L-cysteinyl-[protein] + (2E,6E)-farnesyl diphosphate = S-(2E,6E)-farnesyl-L-cysteinyl-[protein] + diphosphate. Functionally, essential subunit of the farnesyltransferase complex. Catalyzes the transfer of a farnesyl moiety from farnesyl diphosphate to a cysteine at the fourth position from the C-terminus of several proteins having the C-terminal sequence Cys-aliphatic-aliphatic-X. This is Protein farnesyltransferase subunit beta (Fntb) from Mus musculus (Mouse).